Consider the following 134-residue polypeptide: kinetoplast-associated protein 3 (134 aa).

A propeptide spanning residues 1 to 10 (MLRRSPTLLR) is cleaved from the precursor. Residues 106-124 (PKAPKAAKSASSKVKTAAK) are compositionally biased toward low complexity. Residues 106–134 (PKAPKAAKSASSKVKTAAKTAKKTTAARK) form a disordered region. The segment covering 125–134 (TAKKTTAARK) has biased composition (basic residues).

The protein belongs to the KAP family. As to quaternary structure, associates with the kinetoplast DNA network.

It is found in the mitochondrion matrix. The protein localises to the kinetoplast. In terms of biological role, histone H1-like DNA-binding protein involved in the organization and segregation of kinetoplast DNA (kDNA). The mitochondrial DNA of kinetoplastid protozoa consists of about 5,000 minicircles and 20 to 30 maxicircles. These circular DNAs are held together by catenation into a highly organized compact disk structure referred to as a kinetoplast DNA (kDNA) network. Binds preferentially to a specific fragment of minicircle DNA and is able to compact kDNA networks through DNA charge neutralization and condensation. The polypeptide is kinetoplast-associated protein 3 (KAP3) (Crithidia fasciculata).